Reading from the N-terminus, the 364-residue chain is Anthranilate phosphoribosyltransferase 1 (364 aa).

5-phospho-alpha-D-ribose 1-diphosphate is bound by residues Gly102, 105-106, Thr110, 112-115, 130-138, and Ser142; these read GD, NIST, and KHGNRSASS. Gly102 contributes to the anthranilate binding site. Position 114 (Ser114) interacts with Mg(2+). Residue Asn133 participates in anthranilate binding. Arg188 contributes to the anthranilate binding site. Residues Asp247 and Glu248 each contribute to the Mg(2+) site.

This sequence belongs to the anthranilate phosphoribosyltransferase family. As to quaternary structure, homodimer. Mg(2+) is required as a cofactor.

It catalyses the reaction N-(5-phospho-beta-D-ribosyl)anthranilate + diphosphate = 5-phospho-alpha-D-ribose 1-diphosphate + anthranilate. The protein operates within amino-acid biosynthesis; L-tryptophan biosynthesis; L-tryptophan from chorismate: step 2/5. Functionally, catalyzes the transfer of the phosphoribosyl group of 5-phosphorylribose-1-pyrophosphate (PRPP) to anthranilate to yield N-(5'-phosphoribosyl)-anthranilate (PRA). This chain is Anthranilate phosphoribosyltransferase 1, found in Nostoc sp. (strain PCC 7120 / SAG 25.82 / UTEX 2576).